A 176-amino-acid chain; its full sequence is Photosystem I assembly protein Ycf4 (176 aa).

Helical transmembrane passes span 22–42 (FVWA…GTAS) and 48–68 (LIAF…GLFI).

Belongs to the Ycf4 family.

The protein resides in the plastid thylakoid membrane. In terms of biological role, seems to be required for the assembly of the photosystem I complex. This chain is Photosystem I assembly protein Ycf4, found in Cuscuta gronovii (Common dodder).